Here is a 32-residue protein sequence, read N- to C-terminus: MSDINATRLPGMEPPSPMPCVGDADNFTLTRG.

Residues 1 to 10 constitute a propeptide that is removed on maturation; sequence MSDINATRLP. The disordered stretch occupies residues 1–32; sequence MSDINATRLPGMEPPSPMPCVGDADNFTLTRG. Residues 11 to 19 constitute a cross-link (cyclopeptide (Gly-Pro)); sequence GMEPPSPMP. The propeptide occupies 20-32; that stretch reads CVGDADNFTLTRG.

The protein belongs to the MSDIN fungal toxin family. In terms of processing, processed by the macrocyclase-peptidase enzyme POPB to yield a toxic cyclic nonapeptide. POPB first removes 10 residues from the N-terminus. Conformational trapping of the remaining peptide forces the enzyme to release this intermediate rather than proceed to macrocyclization. The enzyme rebinds the remaining peptide in a different conformation and catalyzes macrocyclization of the N-terminal 9 residues.

In terms of biological role, probable toxin that belongs to the MSDIN-like toxin family responsible for a large number of food poisoning cases and deaths. The protein is MSDIN-like toxin proprotein 11 of Amanita bisporigera (Destroying angel).